The chain runs to 934 residues: uncharacterized protein (934 aa).

Residues 1-24 (MKLKKRYLLLGSTLTVSAALILSA) form the signal peptide. The N-palmitoyl cysteine moiety is linked to residue Cys-25. Cys-25 carries S-diacylglycerol cysteine lipidation. A disordered region spans residues 111 to 131 (SGLKGRAQKNGSTDSSDGSSK). Polar residues predominate over residues 119–131 (KNGSTDSSDGSSK).

It localises to the cell membrane. This is an uncharacterized protein from Mycoplasma genitalium (strain ATCC 33530 / DSM 19775 / NCTC 10195 / G37) (Mycoplasmoides genitalium).